The chain runs to 264 residues: MALGKNKRISKGGKRGKRGKAQETMARKEWYDVVAPANFEKRQFAKTICNKTQGTRIAADVLRGRVFEANLADLNQSAGEEEAYRKVRFTVQEVQGRNLLTQFHSMEVTTDKMASLLRKWCTTMETTVEVKTADGYTMRLFVVAFTKPQANQQSRNCYAKQRLVKWLRMRITKMIKRRLSKVQIKEAVSLLTRNVLSDALVRRCNPILPLRELRIRKVRVVRTPKFDAQALLSAHGTIPASVEADQREVEEAVEAAPAAEKAAE.

Over residues 1–19 the composition is skewed to basic residues; sequence MALGKNKRISKGGKRGKRG. The tract at residues 1–23 is disordered; sequence MALGKNKRISKGGKRGKRGKAQE.

The protein belongs to the eukaryotic ribosomal protein eS1 family. As to quaternary structure, component of the small ribosomal subunit. Mature ribosomes consist of a small (40S) and a large (60S) subunit. The 40S subunit contains about 33 different proteins and 1 molecule of RNA (18S). The 60S subunit contains about 49 different proteins and 3 molecules of RNA (25S, 5.8S and 5S).

The protein localises to the cytoplasm. The polypeptide is Small ribosomal subunit protein eS1B (Leishmania infantum).